Here is a 156-residue protein sequence, read N- to C-terminus: MNMNATLLGQAIAFALFVWFCMKYVWPPIMEAIEERQKKIADGLSAAERAAKDLDLAQANASDQLKEAKRAATEIIEQANKRKGQILDEAREEALTERQNILTQGEAELETERNRARDELRKQVATLAVIGAEKILERSINLEAQKDILDNITAKL.

Residues 7 to 29 (LLGQAIAFALFVWFCMKYVWPPI) traverse the membrane as a helical segment.

It belongs to the ATPase B chain family. As to quaternary structure, F-type ATPases have 2 components, F(1) - the catalytic core - and F(0) - the membrane proton channel. F(1) has five subunits: alpha(3), beta(3), gamma(1), delta(1), epsilon(1). F(0) has three main subunits: a(1), b(2) and c(10-14). The alpha and beta chains form an alternating ring which encloses part of the gamma chain. F(1) is attached to F(0) by a central stalk formed by the gamma and epsilon chains, while a peripheral stalk is formed by the delta and b chains.

The protein resides in the cell inner membrane. F(1)F(0) ATP synthase produces ATP from ADP in the presence of a proton or sodium gradient. F-type ATPases consist of two structural domains, F(1) containing the extramembraneous catalytic core and F(0) containing the membrane proton channel, linked together by a central stalk and a peripheral stalk. During catalysis, ATP synthesis in the catalytic domain of F(1) is coupled via a rotary mechanism of the central stalk subunits to proton translocation. Its function is as follows. Component of the F(0) channel, it forms part of the peripheral stalk, linking F(1) to F(0). This chain is ATP synthase subunit b, found in Aliivibrio salmonicida (strain LFI1238) (Vibrio salmonicida (strain LFI1238)).